Reading from the N-terminus, the 189-residue chain is Ras-like protein 1 (189 aa).

10-17 (GAGGVGKS) contributes to the GTP binding site. The Effector region motif lies at 32 to 40 (YDPTIEDSY). GTP-binding positions include 57–61 (DTAGQ) and 116–119 (NKCD). Cys-186 carries the post-translational modification Cysteine methyl ester. Residue Cys-186 is the site of S-geranylgeranyl cysteine attachment. The propeptide at 187–189 (KIL) is removed in mature form.

It belongs to the small GTPase superfamily. Ras family.

The protein localises to the cell membrane. The enzyme catalyses GTP + H2O = GDP + phosphate + H(+). Its activity is regulated as follows. Alternates between an inactive form bound to GDP and an active form bound to GTP. Activated by a guanine nucleotide-exchange factor (GEF) and inactivated by a GTPase-activating protein (GAP). Ras proteins bind GDP/GTP and possess intrinsic GTPase activity. Plays a role in eye development by regulating cell growth, survival of postmitotic ommatidial cells and differentiation of photoreceptor cells. During larval development, mediates Ptth/tor signaling leading to the production of ecdysone, a hormone required for the initiation of metamorphosis. The chain is Ras-like protein 1 from Drosophila persimilis (Fruit fly).